The following is a 210-amino-acid chain: Imidazole glycerol phosphate synthase subunit HisH (210 aa).

The 208-residue stretch at 3 to 210 folds into the Glutamine amidotransferase type-1 domain; it reads KVALLDYGSG…QLLRNWIDLL (208 aa). Catalysis depends on cysteine 81, which acts as the Nucleophile. Catalysis depends on residues histidine 191 and glutamate 193.

Heterodimer of HisH and HisF.

Its subcellular location is the cytoplasm. The enzyme catalyses 5-[(5-phospho-1-deoxy-D-ribulos-1-ylimino)methylamino]-1-(5-phospho-beta-D-ribosyl)imidazole-4-carboxamide + L-glutamine = D-erythro-1-(imidazol-4-yl)glycerol 3-phosphate + 5-amino-1-(5-phospho-beta-D-ribosyl)imidazole-4-carboxamide + L-glutamate + H(+). It carries out the reaction L-glutamine + H2O = L-glutamate + NH4(+). It participates in amino-acid biosynthesis; L-histidine biosynthesis; L-histidine from 5-phospho-alpha-D-ribose 1-diphosphate: step 5/9. In terms of biological role, IGPS catalyzes the conversion of PRFAR and glutamine to IGP, AICAR and glutamate. The HisH subunit catalyzes the hydrolysis of glutamine to glutamate and ammonia as part of the synthesis of IGP and AICAR. The resulting ammonia molecule is channeled to the active site of HisF. This Corynebacterium diphtheriae (strain ATCC 700971 / NCTC 13129 / Biotype gravis) protein is Imidazole glycerol phosphate synthase subunit HisH.